A 330-amino-acid chain; its full sequence is Ketol-acid reductoisomerase (NADP(+)) (330 aa).

The KARI N-terminal Rossmann domain occupies 2–182; it reads ARMYYDEDAN…GGTRAGVLET (181 aa). Residues 25-28, Ser-51, Ser-53, and 83-86 contribute to the NADP(+) site; these read YGSQ and DEVQ. His-108 is an active-site residue. Gly-134 contacts NADP(+). Positions 183–328 constitute a KARI C-terminal knotted domain; that stretch reads TFREETETDL…QDLRAMMSWL (146 aa). Mg(2+) is bound by residues Asp-191, Glu-195, Glu-227, and Glu-231. Ser-252 contacts substrate.

It belongs to the ketol-acid reductoisomerase family. Mg(2+) serves as cofactor.

It carries out the reaction (2R)-2,3-dihydroxy-3-methylbutanoate + NADP(+) = (2S)-2-acetolactate + NADPH + H(+). The enzyme catalyses (2R,3R)-2,3-dihydroxy-3-methylpentanoate + NADP(+) = (S)-2-ethyl-2-hydroxy-3-oxobutanoate + NADPH + H(+). Its pathway is amino-acid biosynthesis; L-isoleucine biosynthesis; L-isoleucine from 2-oxobutanoate: step 2/4. It participates in amino-acid biosynthesis; L-valine biosynthesis; L-valine from pyruvate: step 2/4. Functionally, involved in the biosynthesis of branched-chain amino acids (BCAA). Catalyzes an alkyl-migration followed by a ketol-acid reduction of (S)-2-acetolactate (S2AL) to yield (R)-2,3-dihydroxy-isovalerate. In the isomerase reaction, S2AL is rearranged via a Mg-dependent methyl migration to produce 3-hydroxy-3-methyl-2-ketobutyrate (HMKB). In the reductase reaction, this 2-ketoacid undergoes a metal-dependent reduction by NADPH to yield (R)-2,3-dihydroxy-isovalerate. The protein is Ketol-acid reductoisomerase (NADP(+)) of Microcystis aeruginosa (strain NIES-843 / IAM M-2473).